Here is a 404-residue protein sequence, read N- to C-terminus: Probable tRNA sulfurtransferase (404 aa).

Residues 60–165 form the THUMP domain; the sequence is QPIVEALKLV…DEAAYISYEE (106 aa). ATP-binding positions include 183-184, 208-209, Arg-265, Gly-287, and Gln-296; these read ML and HF.

The protein belongs to the ThiI family.

The protein localises to the cytoplasm. It carries out the reaction [ThiI sulfur-carrier protein]-S-sulfanyl-L-cysteine + a uridine in tRNA + 2 reduced [2Fe-2S]-[ferredoxin] + ATP + H(+) = [ThiI sulfur-carrier protein]-L-cysteine + a 4-thiouridine in tRNA + 2 oxidized [2Fe-2S]-[ferredoxin] + AMP + diphosphate. It catalyses the reaction [ThiS sulfur-carrier protein]-C-terminal Gly-Gly-AMP + S-sulfanyl-L-cysteinyl-[cysteine desulfurase] + AH2 = [ThiS sulfur-carrier protein]-C-terminal-Gly-aminoethanethioate + L-cysteinyl-[cysteine desulfurase] + A + AMP + 2 H(+). It functions in the pathway cofactor biosynthesis; thiamine diphosphate biosynthesis. In terms of biological role, catalyzes the ATP-dependent transfer of a sulfur to tRNA to produce 4-thiouridine in position 8 of tRNAs, which functions as a near-UV photosensor. Also catalyzes the transfer of sulfur to the sulfur carrier protein ThiS, forming ThiS-thiocarboxylate. This is a step in the synthesis of thiazole, in the thiamine biosynthesis pathway. The sulfur is donated as persulfide by IscS. This Streptococcus pyogenes serotype M49 (strain NZ131) protein is Probable tRNA sulfurtransferase.